We begin with the raw amino-acid sequence, 584 residues long: Beta-(1--&gt;2)glucan export ATP-binding/permease protein NdvA (584 aa).

The ABC transmembrane type-1 domain occupies 21–301 (VSLVVAANII…MRQFSTQIFE (281 aa)). 6 helical membrane passes run 29–49 (IILA…IDAI), 57–77 (DILF…VLVA), 136–156 (THLA…SMDV), 158–178 (LTLV…MVMD), 248–268 (IAST…VQSG), and 272–292 (VGDV…LDQM). The ABC transporter domain occupies 335–569 (VEFRHVSFDF…GGRFAALLHT (235 aa)). 368–375 (GPTGAGKT) contacts ATP.

The protein belongs to the ABC transporter superfamily. Beta-(1--&gt;2)glucan exporter (TC 3.A.1.108.1) family. In terms of assembly, homodimer.

The protein localises to the cell inner membrane. It catalyses the reaction [(1-&gt;2)-beta-D-glucosyl](n)(in) + ATP + H2O = [(1-&gt;2)-beta-D-glucosyl](n)(out) + ADP + phosphate + H(+). Its function is as follows. Involved in beta-(1--&gt;2)glucan export. Transmembrane domains (TMD) form a pore in the inner membrane and the ATP-binding domain (NBD) is responsible for energy generation. The protein is Beta-(1--&gt;2)glucan export ATP-binding/permease protein NdvA of Agrobacterium vitis (Rhizobium vitis).